Here is a 1303-residue protein sequence, read N- to C-terminus: Phosphoribosylformylglycinamidine synthase (1303 aa).

ATP contacts are provided by residues 308 to 319 (GASTGSGGEIRD) and Ala679. Mg(2+)-binding residues include Glu719, Asn723, and Asp892. The tract at residues 1003 to 1023 (LRDNPACADQEHEAKKDNSDP) is disordered. Positions 1011-1021 (DQEHEAKKDNS) are enriched in basic and acidic residues. The region spanning 1050-1303 (MAILREQGVN…MFQNARKNIG (254 aa)) is the Glutamine amidotransferase type-1 domain. Cys1143 functions as the Nucleophile in the catalytic mechanism. Catalysis depends on residues His1268 and Glu1270.

In the N-terminal section; belongs to the FGAMS family. Monomer.

Its subcellular location is the cytoplasm. It catalyses the reaction N(2)-formyl-N(1)-(5-phospho-beta-D-ribosyl)glycinamide + L-glutamine + ATP + H2O = 2-formamido-N(1)-(5-O-phospho-beta-D-ribosyl)acetamidine + L-glutamate + ADP + phosphate + H(+). It functions in the pathway purine metabolism; IMP biosynthesis via de novo pathway; 5-amino-1-(5-phospho-D-ribosyl)imidazole from N(2)-formyl-N(1)-(5-phospho-D-ribosyl)glycinamide: step 1/2. In terms of biological role, phosphoribosylformylglycinamidine synthase involved in the purines biosynthetic pathway. Catalyzes the ATP-dependent conversion of formylglycinamide ribonucleotide (FGAR) and glutamine to yield formylglycinamidine ribonucleotide (FGAM) and glutamate. In Aliivibrio fischeri (strain ATCC 700601 / ES114) (Vibrio fischeri), this protein is Phosphoribosylformylglycinamidine synthase.